The primary structure comprises 360 residues: Phosphoserine aminotransferase (360 aa).

Arginine 42 contacts L-glutamate. Pyridoxal 5'-phosphate contacts are provided by residues 76 to 77, tryptophan 102, threonine 153, aspartate 172, and glutamine 195; that span reads AR. At lysine 196 the chain carries N6-(pyridoxal phosphate)lysine. 237 to 238 lines the pyridoxal 5'-phosphate pocket; it reads NT.

Belongs to the class-V pyridoxal-phosphate-dependent aminotransferase family. SerC subfamily. As to quaternary structure, homodimer. Pyridoxal 5'-phosphate is required as a cofactor.

Its subcellular location is the cytoplasm. The catalysed reaction is O-phospho-L-serine + 2-oxoglutarate = 3-phosphooxypyruvate + L-glutamate. The enzyme catalyses 4-(phosphooxy)-L-threonine + 2-oxoglutarate = (R)-3-hydroxy-2-oxo-4-phosphooxybutanoate + L-glutamate. Its pathway is amino-acid biosynthesis; L-serine biosynthesis; L-serine from 3-phospho-D-glycerate: step 2/3. The protein operates within cofactor biosynthesis; pyridoxine 5'-phosphate biosynthesis; pyridoxine 5'-phosphate from D-erythrose 4-phosphate: step 3/5. Catalyzes the reversible conversion of 3-phosphohydroxypyruvate to phosphoserine and of 3-hydroxy-2-oxo-4-phosphonooxybutanoate to phosphohydroxythreonine. This chain is Phosphoserine aminotransferase, found in Photobacterium profundum (strain SS9).